Consider the following 67-residue polypeptide: Beta-defensin 14 (67 aa).

Positions 1–22 (MRLHYLLFVFLILFLVPAPGDA) are cleaved as a signal peptide. 3 cysteine pairs are disulfide-bonded: Cys33–Cys62, Cys40–Cys55, and Cys45–Cys63.

Belongs to the beta-defensin family.

It is found in the secreted. Has antibacterial activity. This Mus musculus (Mouse) protein is Beta-defensin 14 (Defb14).